The chain runs to 258 residues: DNA-directed RNA polymerase subunit Rpo3 (258 aa).

The protein belongs to the archaeal Rpo3/eukaryotic RPB3 RNA polymerase subunit family. In terms of assembly, part of the RNA polymerase complex.

It is found in the cytoplasm. It catalyses the reaction RNA(n) + a ribonucleoside 5'-triphosphate = RNA(n+1) + diphosphate. Its function is as follows. DNA-dependent RNA polymerase (RNAP) catalyzes the transcription of DNA into RNA using the four ribonucleoside triphosphates as substrates. This Pyrobaculum calidifontis (strain DSM 21063 / JCM 11548 / VA1) protein is DNA-directed RNA polymerase subunit Rpo3.